A 392-amino-acid polypeptide reads, in one-letter code: Protein O-glucosyltransferase 1 (392 aa).

The N-terminal stretch at Met-1–Gly-23 is a signal peptide. 4 cysteine pairs are disulfide-bonded: Cys-49-Cys-56, Cys-54-Cys-357, Cys-102-Cys-108, and Cys-263-Cys-286. N-linked (GlcNAc...) asparagine glycosylation occurs at Asn-53. The tract at residues Met-103–Arg-107 is interaction with the consensus sequence C-X-S-X-[PA]-C in peptide substrates. Catalysis depends on Asp-133, which acts as the Proton donor/acceptor. An interaction with the consensus sequence C-X-S-X-[PA]-C in peptide substrates region spans residues Ala-172 to Pro-178. Tyr-177 contributes to the UDP-alpha-D-glucose binding site. Residue Asn-204 is glycosylated (N-linked (GlcNAc...) asparagine). UDP-alpha-D-glucose contacts are provided by residues Ser-212, Arg-218, and Val-274–Arg-279. N-linked (GlcNAc...) asparagine glycosylation is present at Asn-373. The short motif at Lys-389–Leu-392 is the Prevents secretion from ER element.

It belongs to the glycosyltransferase 90 family.

It localises to the endoplasmic reticulum lumen. It catalyses the reaction L-seryl-[EGF-like domain protein] + UDP-alpha-D-xylose = 3-O-(beta-D-xylosyl)-L-seryl-[EGF-like domain protein] + UDP + H(+). It carries out the reaction L-seryl-[EGF-like domain protein] + UDP-alpha-D-glucose = 3-O-(beta-D-glucosyl)-L-seryl-[EGF-like domain protein] + UDP + H(+). Its pathway is protein modification; protein glycosylation. Its function is as follows. Dual specificity glycosyltransferase that catalyzes the transfer of glucose and xylose from UDP-glucose and UDP-xylose, respectively, to a serine residue found in the consensus sequence of C-X-S-X-P-C. Specifically targets extracellular EGF repeats of protein such as CRB2, F7, F9 and NOTCH2. Acts as a positive regulator of Notch signaling by mediating O-glucosylation of Notch, leading to regulate muscle development. Notch glucosylation does not affect Notch ligand binding. Required during early development to promote gastrulation: acts by mediating O-glucosylation of CRB2, which is required for CRB2 localization to the cell membrane. This chain is Protein O-glucosyltransferase 1 (Poglut1), found in Rattus norvegicus (Rat).